Consider the following 149-residue polypeptide: Hydrogenase expression/formation protein HupT (149 aa).

The protein belongs to the HupJ family.

This is Hydrogenase expression/formation protein HupT (hupT) from Azotobacter chroococcum mcd 1.